Reading from the N-terminus, the 568-residue chain is Urease subunit alpha (568 aa).

The 439-residue stretch at 130 to 568 (GGIDTHIHFI…LPMAQRYFLF (439 aa)) folds into the Urease domain. Ni(2+) contacts are provided by His-135, His-137, and Lys-218. The residue at position 218 (Lys-218) is an N6-carboxylysine. His-220 lines the substrate pocket. Ni(2+) contacts are provided by His-247 and His-273. His-321 (proton donor) is an active-site residue. Position 361 (Asp-361) interacts with Ni(2+).

The protein belongs to the metallo-dependent hydrolases superfamily. Urease alpha subunit family. As to quaternary structure, heterotrimer of UreA (gamma), UreB (beta) and UreC (alpha) subunits. Three heterotrimers associate to form the active enzyme. Requires Ni cation as cofactor. In terms of processing, carboxylation allows a single lysine to coordinate two nickel ions.

The protein resides in the cytoplasm. The catalysed reaction is urea + 2 H2O + H(+) = hydrogencarbonate + 2 NH4(+). It functions in the pathway nitrogen metabolism; urea degradation; CO(2) and NH(3) from urea (urease route): step 1/1. In Burkholderia ambifaria (strain ATCC BAA-244 / DSM 16087 / CCUG 44356 / LMG 19182 / AMMD) (Burkholderia cepacia (strain AMMD)), this protein is Urease subunit alpha.